The chain runs to 589 residues: Kelch-like protein 25 (589 aa).

One can recognise a BTB domain in the interval 46–114 (TDVTLWAGDR…AYSSRIVINE (69 aa)). A BACK domain is found at 149 to 250 (CLGMMVLSDA…LPSDCLKKAV (102 aa)). 6 Kelch repeats span residues 296–340 (TLLI…AIGC), 341–388 (KVYV…ELEN), 389–444 (CLYV…SAKL), 446–492 (LFVF…VLGS), 493–538 (QIFI…ASGN), and 539–585 (KLYV…STWK).

As to quaternary structure, component of the BCR(KLHL25) E3 ubiquitin ligase complex, at least composed of CUL3, KLHL25 and RBX1.

It functions in the pathway protein modification; protein ubiquitination. Substrate-specific adapter of a BCR (BTB-CUL3-RBX1) E3 ubiquitin ligase complex involved in various processes, such as translation homeostasis and lipid synthesis. The BCR(KLHL25) ubiquitin ligase complex acts by mediating ubiquitination of hypophosphorylated EIF4EBP1 (4E-BP1): ubiquitination and subsequent degradation of hypophosphorylated EIF4EBP1 (4E-BP1) probably serves as a homeostatic mechanism to maintain translation and prevent eIF4E inhibition when eIF4E levels are low. The BCR(KLHL25) complex does not target EIF4EBP1 (4E-BP1) when it is hyperphosphorylated or associated with eIF4E. The BCR(KLHL25) complex also acts as a regulator of lipid synthesis by mediating ubiquitination and degradation of ACLY, thereby inhibiting lipid synthesis. BCR(KLHL25)-mediated degradation of ACLY promotes fatty acid oxidation and is required for differentiation of inducible regulatory T (iTreg) cells. The sequence is that of Kelch-like protein 25 from Rattus norvegicus (Rat).